Reading from the N-terminus, the 189-residue chain is Ribosome maturation factor RimM (189 aa).

One can recognise a PRC barrel domain in the interval 96-169; sequence EDEFFQTDLI…TLLVEPYAAG (74 aa). The segment at 170 to 189 is disordered; the sequence is LIADDEDERPQNEKKKPKKS.

Belongs to the RimM family. As to quaternary structure, binds ribosomal protein uS19.

It is found in the cytoplasm. In terms of biological role, an accessory protein needed during the final step in the assembly of 30S ribosomal subunit, possibly for assembly of the head region. Essential for efficient processing of 16S rRNA. May be needed both before and after RbfA during the maturation of 16S rRNA. It has affinity for free ribosomal 30S subunits but not for 70S ribosomes. The chain is Ribosome maturation factor RimM from Brucella anthropi (strain ATCC 49188 / DSM 6882 / CCUG 24695 / JCM 21032 / LMG 3331 / NBRC 15819 / NCTC 12168 / Alc 37) (Ochrobactrum anthropi).